The sequence spans 68 residues: Ferredoxin Fdx (68 aa).

5 residues coordinate [3Fe-4S] cluster: Cys-12, Gln-13, Ala-16, Cys-18, and Cys-56.

[3Fe-4S] cluster is required as a cofactor.

In terms of biological role, ferredoxin that is the redox partner of cytochrome CYP51, a sterol 14alpha-demethylase encoded by an adjacent gene. The polypeptide is Ferredoxin Fdx (Mycobacterium tuberculosis (strain ATCC 25618 / H37Rv)).